Consider the following 591-residue polypeptide: A-type ATP synthase subunit A (591 aa).

An ATP-binding site is contributed by 233 to 240 (GPFGSGKT).

This sequence belongs to the ATPase alpha/beta chains family. Has multiple subunits with at least A(3), B(3), C, D, E, F, H, I and proteolipid K(x).

Its subcellular location is the cell membrane. The catalysed reaction is ATP + H2O + 4 H(+)(in) = ADP + phosphate + 5 H(+)(out). Component of the A-type ATP synthase that produces ATP from ADP in the presence of a proton gradient across the membrane. The A chain is the catalytic subunit. In Metallosphaera sedula (strain ATCC 51363 / DSM 5348 / JCM 9185 / NBRC 15509 / TH2), this protein is A-type ATP synthase subunit A.